A 227-amino-acid polypeptide reads, in one-letter code: MSTAIVVFSGGQDSTTCLIQALTQYDHVHCITFDYGQRHNQEIEVAKKVSIELGAASHKVMDVGLLNELAVSSLTRDNIPVSHELQENGLPNSFVPGRNILFLTLAGIYAYQLGAEAVITGVCETDFSGYPDCRDEFVKSINQSLVLGMDRQLEIKTPLMWLNKAETWALADKYGKLDYVRNHTLTCYNGVIGDGCGDCPSCDLRKNGLDAYLENKEPVMADLESKL.

8–18 (FSGGQDSTTCL) contacts ATP. Cysteine 187, cysteine 196, cysteine 199, and cysteine 202 together coordinate Zn(2+).

Belongs to the QueC family. Requires Zn(2+) as cofactor.

It catalyses the reaction 7-carboxy-7-deazaguanine + NH4(+) + ATP = 7-cyano-7-deazaguanine + ADP + phosphate + H2O + H(+). Its pathway is purine metabolism; 7-cyano-7-deazaguanine biosynthesis. In terms of biological role, catalyzes the ATP-dependent conversion of 7-carboxy-7-deazaguanine (CDG) to 7-cyano-7-deazaguanine (preQ(0)). The polypeptide is 7-cyano-7-deazaguanine synthase (Aliivibrio fischeri (strain ATCC 700601 / ES114) (Vibrio fischeri)).